We begin with the raw amino-acid sequence, 1649 residues long: eIF-2-alpha kinase GCN2 (1649 aa).

The disordered stretch occupies residues 1–26 (MAGGRGAAGRGPAEPQESYSQRQDHE). The RWD domain occupies 25–137 (HELQALEAIY…HHVQSFLSEH (113 aa)). The stretch at 146-205 (HEEMLERQAQEKQQRLLEARQKEEQEQREILHEIQKRKEEIKEEKKRKEMAKQERLEITS) forms a coiled coil. Positions 227-260 (HGGSPDFVGNGKARAHSSGRSRRERQYSVCSGEA) are disordered. S230 carries the post-translational modification Phosphoserine. Residues 239–249 (ARAHSSGRSRR) show a composition bias toward basic residues. 2 consecutive Protein kinase domains span residues 296–539 (VYNA…HSFI) and 590–1001 (FEEL…SELL). Residues 596 to 604 (LGKGAFGAV) and K619 each bind ATP. The segment at 662–785 (PAVPGTPPPD…CNEKDSRHEI (124 aa)) is disordered. T667 bears the Phosphothreonine mark. The segment covering 705–721 (LSSSVEWSTSAERSNSA) has biased composition (polar residues). 2 stretches are compositionally biased toward acidic residues: residues 731–740 (SSDEEDEDER) and 754–764 (SDSDIIFDNED). Catalysis depends on D847, which acts as the Proton acceptor. T870 carries the phosphothreonine modification. Phosphothreonine; by autocatalysis occurs at positions 899 and 904. Residues 1022 to 1493 (TDGKAYRTMM…DHVMQKLRTK (472 aa)) are histidyl-tRNA synthetase-like. K1259 bears the N6-acetyllysine mark.

Belongs to the protein kinase superfamily. Ser/Thr protein kinase family. GCN2 subfamily. As to quaternary structure, homodimer; homodimerization is important for kinase activation by uncharged tRNAs. Interacts with GCN1; this interaction stimulates EIF2AK4/GCN2 kinase activity and is impaired by IMPACT upon a variety of stress conditions, such as amino acid depletion, UV-C irradiation, proteasome inhibitor treatment and glucose deprivation. Interacts with DNAJC3; this interaction inhibits EIF2AK4/GCN2 kinase activity during endoplasmic reticulum (ER), hypothermic and amino acid-starving stress conditions. Interacts with MAP3K20; activates EIF2AK4/GCN2 kinase activity in response to moderate ribotoxic stress. In terms of processing, autophosphorylated; autophosphorylation on Thr-899 is increased upon amino acid starvation and in UV irradiation cells and inhibited in presence of IMPACT.

The protein localises to the cytoplasm. It carries out the reaction L-seryl-[protein] + ATP = O-phospho-L-seryl-[protein] + ADP + H(+). The catalysed reaction is L-threonyl-[protein] + ATP = O-phospho-L-threonyl-[protein] + ADP + H(+). Its function is as follows. Metabolic-stress sensing protein kinase that phosphorylates the alpha subunit of eukaryotic translation initiation factor 2 (EIF2S1/eIF-2-alpha) in response to low amino acid availability. Plays a role as an activator of the integrated stress response (ISR) required for adaptation to amino acid starvation. EIF2S1/eIF-2-alpha phosphorylation in response to stress converts EIF2S1/eIF-2-alpha into a global protein synthesis inhibitor, leading to a global attenuation of cap-dependent translation, and thus to a reduced overall utilization of amino acids, while concomitantly initiating the preferential translation of ISR-specific mRNAs, such as the transcriptional activator ATF4, and hence allowing ATF4-mediated reprogramming of amino acid biosynthetic gene expression to alleviate nutrient depletion. Required for the translational induction of protein kinase PRKCH following amino acid starvation. Binds uncharged tRNAs. Involved in cell cycle arrest by promoting cyclin D1 mRNA translation repression after the unfolded protein response pathway (UPR) activation or cell cycle inhibitor CDKN1A/p21 mRNA translation activation in response to amino acid deprivation. Plays a role in the consolidation of synaptic plasticity, learning as well as formation of long-term memory. Plays a role in neurite outgrowth inhibition. Plays a role in feeding behavior to maintain amino acid homeostasis; contributes to the innate aversion toward diets of imbalanced amino acid composition. Plays a proapoptotic role in response to glucose deprivation. Promotes global cellular protein synthesis repression in response to UV irradiation independently of the stress-activated protein kinase/c-Jun N-terminal kinase (SAPK/JNK) and p38 MAPK signaling pathways. Plays a role in the antiviral response against alphavirus infection; impairs early viral mRNA translation of the incoming genomic virus RNA, thus preventing alphavirus replication. The protein is eIF-2-alpha kinase GCN2 of Rattus norvegicus (Rat).